The following is a 223-amino-acid chain: NLP effector protein 2 (223 aa).

The short motif at 90 to 100 (AIMYSWYFPKD) is the Conserved undecapeptide motif element. The Conserved p motif motif lies at 107–113 (GHRHDWE).

It belongs to the Necrosis inducing protein (NPP1) family.

It is found in the secreted. The protein resides in the host cytoplasm. Its function is as follows. Probable secreted effector that may act as a pathogen-associated molecular pattern (PAMP) recognized by the plant immune system. Seems not to induce necrosis, neither in several susceptible or resistant Vitis species nor in the dicot model plant Nicotiana benthamiana. The sequence is that of NLP effector protein 2 from Plasmopara viticola (Downy mildew of grapevine).